Reading from the N-terminus, the 968-residue chain is RNA polymerase-associated protein RapA (968 aa).

Residues 164 to 334 (DVGRRHAPRV…FARLRLLDPN (171 aa)) enclose the Helicase ATP-binding domain. 177–184 (DEVGLGKT) is a binding site for ATP. The DEAH box motif lies at 280 to 283 (DEAH). Residues 490–662 (RVEWLMGYLT…YLASPDQTEG (173 aa)) enclose the Helicase C-terminal domain.

The protein belongs to the SNF2/RAD54 helicase family. RapA subfamily. Interacts with the RNAP. Has a higher affinity for the core RNAP than for the holoenzyme. Its ATPase activity is stimulated by binding to RNAP.

Functionally, transcription regulator that activates transcription by stimulating RNA polymerase (RNAP) recycling in case of stress conditions such as supercoiled DNA or high salt concentrations. Probably acts by releasing the RNAP, when it is trapped or immobilized on tightly supercoiled DNA. Does not activate transcription on linear DNA. Probably not involved in DNA repair. The chain is RNA polymerase-associated protein RapA from Escherichia coli O9:H4 (strain HS).